A 172-amino-acid chain; its full sequence is FMN reductase (NADH) RutF 2 (172 aa).

This sequence belongs to the non-flavoprotein flavin reductase family. RutF subfamily.

It catalyses the reaction FMNH2 + NAD(+) = FMN + NADH + 2 H(+). Catalyzes the reduction of FMN to FMNH2 which is used to reduce pyrimidine by RutA via the Rut pathway. This is FMN reductase (NADH) RutF 2 from Methylorubrum extorquens (strain PA1) (Methylobacterium extorquens).